Reading from the N-terminus, the 1178-residue chain is Leucine--tRNA ligase, cytoplasmic (1178 aa).

L-leucine contacts are provided by Tyr-54 and Tyr-56. The short motif at 62–65 (HLGH) is the 'HIGH' region element. Ser-169 carries the phosphoserine modification. Positions 262–511 (GPQEYTLVKL…DAGDALIYME (250 aa)) are editing domain. L-leucine is bound by residues Leu-596 and Ser-599. The 'KMSKS' region signature appears at 718–722 (KMSKS). Lys-721 provides a ligand contact to ATP. Phosphoserine is present on Ser-722. 2 positions are modified to N6-acetyllysine: Lys-972 and Lys-1049.

This sequence belongs to the class-I aminoacyl-tRNA synthetase family.

It localises to the cytoplasm. The catalysed reaction is tRNA(Leu) + L-leucine + ATP = L-leucyl-tRNA(Leu) + AMP + diphosphate. It carries out the reaction L-methionyl-tRNA(Leu) + H2O = tRNA(Leu) + L-methionine + H(+). 5-fluoro-1,3-dihydro-1-hydroxy-1,2-benzoxaborole inhibits LARS1 by forming a covalent adduct with the 3' adenosine of tRNA(Leu) at the editing site, thus locking the enzyme in an inactive conformation. Functionally, aminoacyl-tRNA synthetase that catalyzes the specific attachment of leucine to its cognate tRNA (tRNA(Leu)). It performs tRNA aminoacylation in a two-step reaction: Leu is initially activated by ATP to form a leucyl-adenylate (Leu-AMP) intermediate; then the leucyl moiety is transferred to the acceptor 3' end of the tRNA to yield leucyl-tRNA. To improve the fidelity of catalytic reactions, it is also able to hydrolyze misactivated aminoacyl-adenylate intermediates (pre-transfer editing) and mischarged aminoacyl-tRNAs (post-transfer editing). The protein is Leucine--tRNA ligase, cytoplasmic (Lars1) of Mus musculus (Mouse).